The sequence spans 198 residues: Recombination protein RecR (198 aa).

The segment at 57–72 (CSECQTLTDKDPCAVC) adopts a C4-type zinc-finger fold. The Toprim domain maps to 80-175 (RIICVVEGVP…KVTRIAQGIP (96 aa)).

The protein belongs to the RecR family.

In terms of biological role, may play a role in DNA repair. It seems to be involved in an RecBC-independent recombinational process of DNA repair. It may act with RecF and RecO. The sequence is that of Recombination protein RecR from Anaeromyxobacter sp. (strain Fw109-5).